The primary structure comprises 440 residues: MDQLAHHYRAHIAELNRRVAEILSREALSGLVIHSGQPHRMFLDDINYPFKANPHFKAWLPVLDNPNCWLVVNGRDKPQLIFYRPVDFWHKVSDVPDMFWTEHFDIKLLTKADKVAELLPKDTVNWAYLGEHLDVAEVLGFTSRNPDAVMSYLHYHRTTKTEYELECMRRANQIAVQGHLAAKNAFYNGASEFEIQQHYLSAVGQSENEVPYGNIIALNQNAAILHYTALEHQSPAKRLSFLIDAGASYFGYASDITRTYAFEKNRFDELIAAMNKAQLELIDMMRPGVRYPDLHLATHAKVAQMLLDFDLATGDAQGLVDQGITSAFFPHGLGHMLGLQVHDVGGFSHDERGTHIAAPEAHPFLRCTRILAPNQVLTMEPGLYIIDTLLNELKQDSRGLQINWQTVDELRPFGGIRIEDNVIVHQDRNENMTRELGLAD.

5 residues coordinate Mn(2+): Asp244, Asp255, His335, Glu380, and Glu419.

The protein belongs to the peptidase M24B family. Bacterial-type prolidase subfamily. Mn(2+) is required as a cofactor.

The enzyme catalyses Xaa-L-Pro dipeptide + H2O = an L-alpha-amino acid + L-proline. In terms of biological role, splits dipeptides with a prolyl residue in the C-terminal position. The protein is Xaa-Pro dipeptidase of Shewanella putrefaciens (strain CN-32 / ATCC BAA-453).